Here is a 1026-residue protein sequence, read N- to C-terminus: Multidrug resistance protein MdtC (1026 aa).

Helical transmembrane passes span 15–35 (ILIA…LPVA), 333–353 (EVEE…FLFL), 360–380 (LIPA…MYLC), 387–407 (LSLM…IVVL), 431–451 (VGFT…PLLL), 463–483 (FAVT…TLTP), 528–548 (LVGV…IAIP), 853–873 (LILI…LYES), 897–917 (LFNA…IGIV), 953–973 (PIMM…LSGG), and 984–1004 (ITIV…TPVV).

It belongs to the resistance-nodulation-cell division (RND) (TC 2.A.6) family. MdtC subfamily. Part of a tripartite efflux system composed of MdtA, MdtB and MdtC. MdtC forms a heteromultimer with MdtB.

It is found in the cell inner membrane. The chain is Multidrug resistance protein MdtC from Salmonella paratyphi A (strain AKU_12601).